The chain runs to 165 residues: MRFSAFLTLLLVAFVASCSTFASAESVAEGRRLRADAAPVPVNKDNVAKLAGGFLEKLKTNTALTKAANTIKNSNADEAAVRKAITTFAAAKESAKMSDEGIAKISAMMAGTVQKNPKSWPRLRKFAKVTLGATVAGFAIYGAYKALFDRKSSTAATTTTTTGSA.

An N-terminal signal peptide occupies residues 1 to 24; it reads MRFSAFLTLLLVAFVASCSTFASA. Positions 31–57 match the RxLR-dEER motif; that stretch reads RRLRADAAPVPVNKDNVAKLAGGFLEK. A helical membrane pass occupies residues 129 to 149; it reads VTLGATVAGFAIYGAYKALFD.

Belongs to the RxLR effector family.

It localises to the secreted. Its subcellular location is the host mitochondrion membrane. It is found in the host endoplasmic reticulum membrane. Effector that enhances P.infestans colonization of Nicotiana benthamiana leaves. The sequence is that of RxLR effector protein PITG_09218 from Phytophthora infestans (strain T30-4) (Potato late blight agent).